We begin with the raw amino-acid sequence, 473 residues long: Glutamate--tRNA ligase 2 (473 aa).

A 'HIGH' region motif is present at residues 11–21 (PSPTGYLHIGG). A compositionally biased stretch (basic and acidic residues) spans 113–133 (KARAEGRPPRYDGRWRDRDPS). The tract at residues 113–136 (KARAEGRPPRYDGRWRDRDPSEAP) is disordered. The 'KMSKS' region signature appears at 240 to 244 (KLSKR). Lys243 lines the ATP pocket.

This sequence belongs to the class-I aminoacyl-tRNA synthetase family. Glutamate--tRNA ligase type 1 subfamily. Monomer.

The protein localises to the cytoplasm. The enzyme catalyses tRNA(Glu) + L-glutamate + ATP = L-glutamyl-tRNA(Glu) + AMP + diphosphate. In terms of biological role, catalyzes the attachment of glutamate to tRNA(Glu) in a two-step reaction: glutamate is first activated by ATP to form Glu-AMP and then transferred to the acceptor end of tRNA(Glu). The chain is Glutamate--tRNA ligase 2 from Brucella abortus (strain S19).